Here is a 390-residue protein sequence, read N- to C-terminus: Putative nickel insertion protein (390 aa).

It belongs to the LarC family.

The chain is Putative nickel insertion protein from Myxococcus xanthus (strain DK1622).